Reading from the N-terminus, the 496-residue chain is L-arabinose isomerase (496 aa).

4 residues coordinate Mn(2+): glutamate 305, glutamate 330, histidine 347, and histidine 446.

It belongs to the arabinose isomerase family. Mn(2+) serves as cofactor.

The catalysed reaction is beta-L-arabinopyranose = L-ribulose. It participates in carbohydrate degradation; L-arabinose degradation via L-ribulose; D-xylulose 5-phosphate from L-arabinose (bacterial route): step 1/3. Its function is as follows. Catalyzes the conversion of L-arabinose to L-ribulose. In Bacillus subtilis (strain 168), this protein is L-arabinose isomerase.